The sequence spans 317 residues: tRNA pseudouridine synthase B (317 aa).

Catalysis depends on Asp-47, which acts as the Nucleophile.

It belongs to the pseudouridine synthase TruB family. Type 1 subfamily.

The catalysed reaction is uridine(55) in tRNA = pseudouridine(55) in tRNA. Responsible for synthesis of pseudouridine from uracil-55 in the psi GC loop of transfer RNAs. The chain is tRNA pseudouridine synthase B from Shewanella denitrificans (strain OS217 / ATCC BAA-1090 / DSM 15013).